The sequence spans 210 residues: Urease accessory protein UreG (210 aa).

15–22 is a GTP binding site; it reads GPVGSGKT.

This sequence belongs to the SIMIBI class G3E GTPase family. UreG subfamily. Homodimer. UreD, UreF and UreG form a complex that acts as a GTP-hydrolysis-dependent molecular chaperone, activating the urease apoprotein by helping to assemble the nickel containing metallocenter of UreC. The UreE protein probably delivers the nickel.

Its subcellular location is the cytoplasm. Facilitates the functional incorporation of the urease nickel metallocenter. This process requires GTP hydrolysis, probably effectuated by UreG. This is Urease accessory protein UreG from Ralstonia nicotianae (strain ATCC BAA-1114 / GMI1000) (Ralstonia solanacearum).